The primary structure comprises 478 residues: Protein nucleotidyltransferase YdiU (478 aa).

Gly-84, Gly-86, Arg-87, Lys-107, Asp-119, Gly-120, Arg-170, and Arg-177 together coordinate ATP. Residue Asp-246 is the Proton acceptor of the active site. 2 residues coordinate Mg(2+): Asn-247 and Asp-256. ATP is bound at residue Asp-256.

It belongs to the SELO family. Mg(2+) serves as cofactor. It depends on Mn(2+) as a cofactor.

It carries out the reaction L-seryl-[protein] + ATP = 3-O-(5'-adenylyl)-L-seryl-[protein] + diphosphate. The enzyme catalyses L-threonyl-[protein] + ATP = 3-O-(5'-adenylyl)-L-threonyl-[protein] + diphosphate. The catalysed reaction is L-tyrosyl-[protein] + ATP = O-(5'-adenylyl)-L-tyrosyl-[protein] + diphosphate. It catalyses the reaction L-histidyl-[protein] + UTP = N(tele)-(5'-uridylyl)-L-histidyl-[protein] + diphosphate. It carries out the reaction L-seryl-[protein] + UTP = O-(5'-uridylyl)-L-seryl-[protein] + diphosphate. The enzyme catalyses L-tyrosyl-[protein] + UTP = O-(5'-uridylyl)-L-tyrosyl-[protein] + diphosphate. Its function is as follows. Nucleotidyltransferase involved in the post-translational modification of proteins. It can catalyze the addition of adenosine monophosphate (AMP) or uridine monophosphate (UMP) to a protein, resulting in modifications known as AMPylation and UMPylation. The sequence is that of Protein nucleotidyltransferase YdiU from Shigella boydii serotype 18 (strain CDC 3083-94 / BS512).